Here is a 135-residue protein sequence, read N- to C-terminus: Large ribosomal subunit protein mL41A (135 aa).

The N-terminal 13 residues, 1–13 (MGLISKIARGLVR), are a transit peptide targeting the mitochondrion.

Belongs to the mitochondrion-specific ribosomal protein mL41 family. Component of the mitochondrial ribosome large subunit (39S) which comprises a 16S rRNA and about 50 distinct proteins.

It is found in the mitochondrion. Functionally, component of the mitochondrial ribosome large subunit. Also involved in apoptosis and cell cycle. The protein is Large ribosomal subunit protein mL41A (mrpl41-a) of Xenopus laevis (African clawed frog).